The primary structure comprises 419 residues: Putative polyketide beta-ketoacyl synthase 2 (419 aa).

The Ketosynthase family 3 (KS3) domain occupies 10–413 (TRRTAVTGIG…GSNAALVLRP (404 aa)).

The protein belongs to the thiolase-like superfamily. Beta-ketoacyl-ACP synthases family.

Its pathway is antibiotic biosynthesis; curamycin biosynthesis. The polypeptide is Putative polyketide beta-ketoacyl synthase 2 (curB) (Streptomyces cyaneus (Streptomyces curacoi)).